A 222-amino-acid polypeptide reads, in one-letter code: uncharacterized protein (222 aa).

Residues 43-73 adopt a coiled-coil conformation; the sequence is SQNEEFEYEMERMLSILNEQTMDLTQLQSRI.

This is an uncharacterized protein from Rickettsia conorii (strain ATCC VR-613 / Malish 7).